Here is a 358-residue protein sequence, read N- to C-terminus: 3-dehydroquinate synthase (358 aa).

NAD(+) is bound by residues 105–109 (GVVGD), 129–130 (TT), K142, K151, and 169–172 (TLKT). Residues E184, H245, and H262 each contribute to the Zn(2+) site.

This sequence belongs to the sugar phosphate cyclases superfamily. Dehydroquinate synthase family. The cofactor is NAD(+). It depends on Co(2+) as a cofactor. Zn(2+) serves as cofactor.

It is found in the cytoplasm. It carries out the reaction 7-phospho-2-dehydro-3-deoxy-D-arabino-heptonate = 3-dehydroquinate + phosphate. The protein operates within metabolic intermediate biosynthesis; chorismate biosynthesis; chorismate from D-erythrose 4-phosphate and phosphoenolpyruvate: step 2/7. Catalyzes the conversion of 3-deoxy-D-arabino-heptulosonate 7-phosphate (DAHP) to dehydroquinate (DHQ). The polypeptide is 3-dehydroquinate synthase (Enterococcus faecalis (strain ATCC 700802 / V583)).